A 445-amino-acid chain; its full sequence is Ubiquitin carboxyl-terminal hydrolase MINDY-3 (445 aa).

Cysteine 51 (nucleophile) is an active-site residue. Residue serine 125 is modified to Phosphoserine. Catalysis depends on histidine 287, which acts as the Proton acceptor.

It belongs to the MINDY deubiquitinase family. FAM188 subfamily. As to quaternary structure, interacts with COPS5.

The protein localises to the nucleus. The catalysed reaction is Thiol-dependent hydrolysis of ester, thioester, amide, peptide and isopeptide bonds formed by the C-terminal Gly of ubiquitin (a 76-residue protein attached to proteins as an intracellular targeting signal).. Its function is as follows. Hydrolase that can remove 'Lys-48'-linked conjugated ubiquitin from proteins. The protein is Ubiquitin carboxyl-terminal hydrolase MINDY-3 (MINDY3) of Bos taurus (Bovine).